Reading from the N-terminus, the 186-residue chain is Threonylcarbamoyl-AMP synthase (186 aa).

A YrdC-like domain is found at 2 to 186 (STEFEQAVAA…ARTGAVIRPS (185 aa)).

It belongs to the SUA5 family. TsaC subfamily.

Its subcellular location is the cytoplasm. The catalysed reaction is L-threonine + hydrogencarbonate + ATP = L-threonylcarbamoyladenylate + diphosphate + H2O. Its function is as follows. Required for the formation of a threonylcarbamoyl group on adenosine at position 37 (t(6)A37) in tRNAs that read codons beginning with adenine. Catalyzes the conversion of L-threonine, HCO(3)(-)/CO(2) and ATP to give threonylcarbamoyl-AMP (TC-AMP) as the acyladenylate intermediate, with the release of diphosphate. The sequence is that of Threonylcarbamoyl-AMP synthase from Aeromonas salmonicida (strain A449).